Reading from the N-terminus, the 242-residue chain is Aliphatic sulfonates import ATP-binding protein SsuB 1 (242 aa).

In terms of domain architecture, ABC transporter spans 11–227 (VAVRRLSRAF…RPSHPDFEDL (217 aa)). 43 to 50 (GESGSGKT) contacts ATP.

Belongs to the ABC transporter superfamily. Aliphatic sulfonates importer (TC 3.A.1.17.2) family. In terms of assembly, the complex is composed of two ATP-binding proteins (SsuB), two transmembrane proteins (SsuC) and a solute-binding protein (SsuA).

The protein localises to the cell inner membrane. The catalysed reaction is ATP + H2O + aliphatic sulfonate-[sulfonate-binding protein]Side 1 = ADP + phosphate + aliphatic sulfonateSide 2 + [sulfonate-binding protein]Side 1.. Part of the ABC transporter complex SsuABC involved in aliphatic sulfonates import. Responsible for energy coupling to the transport system. This is Aliphatic sulfonates import ATP-binding protein SsuB 1 from Paracoccus denitrificans (strain Pd 1222).